Here is a 114-residue protein sequence, read N- to C-terminus: MPKAAGDAKLLIQSLNKAYAATPTNLKIIDLYVVFAVVTALLQVVYMGIVGSFPFNSFLSGVLSCIGTAVLAVCHRIQVNKDNKEFKDLAPERAFADFVLCSLVLHLVIMNFLG.

The Cytoplasmic portion of the chain corresponds to 1–30; that stretch reads MPKAAGDAKLLIQSLNKAYAATPTNLKIID. A helical transmembrane segment spans residues 31-51; sequence LYVVFAVVTALLQVVYMGIVG. Position 52 (Ser-52) is a topological domain, lumenal. The chain crosses the membrane as a helical span at residues 53-73; the sequence is FPFNSFLSGVLSCIGTAVLAV. The Cytoplasmic segment spans residues 74-93; that stretch reads CHRIQVNKDNKEFKDLAPER. The chain crosses the membrane as a helical span at residues 94-114; sequence AFADFVLCSLVLHLVIMNFLG.

Belongs to the DAD/OST2 family. As to quaternary structure, component of the oligosaccharyltransferase (OST) complex.

The protein localises to the endoplasmic reticulum membrane. Its pathway is protein modification; protein glycosylation. Functionally, subunit of the oligosaccharyl transferase (OST) complex that catalyzes the initial transfer of a defined glycan (Glc(3)Man(9)GlcNAc(2) in eukaryotes) from the lipid carrier dolichol-pyrophosphate to an asparagine residue within an Asn-X-Ser/Thr consensus motif in nascent polypeptide chains, the first step in protein N-glycosylation. N-glycosylation occurs cotranslationally and the complex associates with the Sec61 complex at the channel-forming translocon complex that mediates protein translocation across the endoplasmic reticulum (ER). All subunits are required for a maximal enzyme activity. This is Dolichyl-diphosphooligosaccharide--protein glycosyltransferase subunit DAD1 (DAD1) from Hordeum vulgare (Barley).